A 345-amino-acid chain; its full sequence is Selenide, water dikinase (345 aa).

Cys-15 is a catalytic residue. ATP-binding positions include Lys-18 and 46–48; that span reads SKD. Asp-49 is a Mg(2+) binding site. ATP contacts are provided by residues Asp-66, Asp-89, and 137-139; that span reads GHS. Asp-89 serves as a coordination point for Mg(2+). Asp-225 contributes to the Mg(2+) binding site.

The protein belongs to the selenophosphate synthase 1 family. Class I subfamily. In terms of assembly, homodimer. Mg(2+) serves as cofactor.

The enzyme catalyses hydrogenselenide + ATP + H2O = selenophosphate + AMP + phosphate + 2 H(+). Functionally, synthesizes selenophosphate from selenide and ATP. The polypeptide is Selenide, water dikinase (Aeromonas hydrophila subsp. hydrophila (strain ATCC 7966 / DSM 30187 / BCRC 13018 / CCUG 14551 / JCM 1027 / KCTC 2358 / NCIMB 9240 / NCTC 8049)).